Here is a 527-residue protein sequence, read N- to C-terminus: T-complex protein 1 subunit delta (527 aa).

It belongs to the TCP-1 chaperonin family. Heterooligomeric complex of about 850 to 900 kDa that forms two stacked rings, 12 to 16 nm in diameter.

The protein resides in the cytoplasm. Functionally, molecular chaperone; assists the folding of proteins upon ATP hydrolysis. Known to play a role, in vitro, in the folding of actin and tubulin. This chain is T-complex protein 1 subunit delta (CCT4), found in Yarrowia lipolytica (strain CLIB 122 / E 150) (Yeast).